A 202-amino-acid polypeptide reads, in one-letter code: Homeobox protein ceh-13 (202 aa).

2 disordered regions span residues 60–83 and 166–202; these read PATASGLSPPASRSSNSSAELPTG and RMKEKKREKEKAFLARNTWESNSPTSSCSGEDVKNFK. Low complexity predominate over residues 63-81; the sequence is ASGLSPPASRSSNSSAELP. A DNA-binding region (homeobox) is located at residues 114 to 173; sequence NGTNRTNFTTHQLTELEKEFHTAKYVNRTRRTEIASNLKLQEAQVKIWFQNRRMKEKKRE. Polar residues predominate over residues 183 to 194; sequence TWESNSPTSSCS.

The protein resides in the nucleus. The sequence is that of Homeobox protein ceh-13 (ceh-13) from Caenorhabditis elegans.